The primary structure comprises 100 residues: Large ribosomal subunit protein uL23 (100 aa).

This sequence belongs to the universal ribosomal protein uL23 family. Part of the 50S ribosomal subunit. Contacts protein L29, and trigger factor when it is bound to the ribosome.

Functionally, one of the early assembly proteins it binds 23S rRNA. One of the proteins that surrounds the polypeptide exit tunnel on the outside of the ribosome. Forms the main docking site for trigger factor binding to the ribosome. The polypeptide is Large ribosomal subunit protein uL23 (Prochlorococcus marinus (strain MIT 9312)).